A 734-amino-acid chain; its full sequence is Photosystem I P700 chlorophyll a apoprotein A2 (734 aa).

The next 8 membrane-spanning stretches (helical) occupy residues 46–69 (IFAS…FHVA), 135–158 (LYTG…LHLQ), 175–199 (LNHH…HVAI), 273–291 (IAHH…GHMY), 330–353 (IHFQ…QHMY), 369–395 (AALY…IFFI), 417–439 (AIIS…LYVH), and 517–535 (FLVH…LILV). [4Fe-4S] cluster contacts are provided by cysteine 559 and cysteine 568. 2 helical membrane-spanning segments follow: residues 575-596 (AFYL…YWHW) and 643-665 (LSVW…MFLI). Histidine 654, methionine 662, and tyrosine 670 together coordinate chlorophyll a. Residue tryptophan 671 coordinates phylloquinone. The chain crosses the membrane as a helical span at residues 707–727 (LVGLAHFSVGYIFTYAAFLIA).

Belongs to the PsaA/PsaB family. As to quaternary structure, the PsaA/B heterodimer binds the P700 chlorophyll special pair and subsequent electron acceptors. PSI consists of a core antenna complex that captures photons, and an electron transfer chain that converts photonic excitation into a charge separation. The eukaryotic PSI reaction center is composed of at least 11 subunits. The cofactor is P700 is a chlorophyll a/chlorophyll a' dimer, A0 is one or more chlorophyll a, A1 is one or both phylloquinones and FX is a shared 4Fe-4S iron-sulfur center..

It is found in the plastid. The protein resides in the chloroplast thylakoid membrane. It catalyses the reaction reduced [plastocyanin] + hnu + oxidized [2Fe-2S]-[ferredoxin] = oxidized [plastocyanin] + reduced [2Fe-2S]-[ferredoxin]. Its function is as follows. PsaA and PsaB bind P700, the primary electron donor of photosystem I (PSI), as well as the electron acceptors A0, A1 and FX. PSI is a plastocyanin-ferredoxin oxidoreductase, converting photonic excitation into a charge separation, which transfers an electron from the donor P700 chlorophyll pair to the spectroscopically characterized acceptors A0, A1, FX, FA and FB in turn. Oxidized P700 is reduced on the lumenal side of the thylakoid membrane by plastocyanin. The chain is Photosystem I P700 chlorophyll a apoprotein A2 from Nymphaea alba (White water-lily).